The primary structure comprises 154 residues: Cytochrome c oxidase subunit 5A, mitochondrial (154 aa).

The N-terminal 45 residues, 1 to 45, are a transit peptide targeting the mitochondrion; the sequence is MLAAALRRCXASVRVLLPKPGAAAPSSWSSSAFRATAAIQSVRCY. The SIFI-degron signature appears at 2–21; the sequence is LAAALRRCXASVRVLLPKPG. N6-acetyllysine occurs at positions 91 and 117. Thr145 is modified (phosphothreonine).

Belongs to the cytochrome c oxidase subunit 5A family. In terms of assembly, component of the cytochrome c oxidase (complex IV, CIV), a multisubunit enzyme composed of 14 subunits. The complex is composed of a catalytic core of 3 subunits MT-CO1, MT-CO2 and MT-CO3, encoded in the mitochondrial DNA, and 11 supernumerary subunits COX4I, COX5A, COX5B, COX6A, COX6B, COX6C, COX7A, COX7B, COX7C, COX8 and NDUFA4, which are encoded in the nuclear genome. The complex exists as a monomer or a dimer and forms supercomplexes (SCs) in the inner mitochondrial membrane with NADH-ubiquinone oxidoreductase (complex I, CI) and ubiquinol-cytochrome c oxidoreductase (cytochrome b-c1 complex, complex III, CIII), resulting in different assemblies (supercomplex SCI(1)III(2)IV(1) and megacomplex MCI(2)III(2)IV(2)). Interacts with AFG1L. Interacts with RAB5IF. In terms of processing, in response to mitochondrial stress, the precursor protein is ubiquitinated by the SIFI complex in the cytoplasm before mitochondrial import, leading to its degradation. Within the SIFI complex, UBR4 initiates ubiquitin chain that are further elongated or branched by KCMF1.

Its subcellular location is the mitochondrion inner membrane. It functions in the pathway energy metabolism; oxidative phosphorylation. Its function is as follows. Component of the cytochrome c oxidase, the last enzyme in the mitochondrial electron transport chain which drives oxidative phosphorylation. The respiratory chain contains 3 multisubunit complexes succinate dehydrogenase (complex II, CII), ubiquinol-cytochrome c oxidoreductase (cytochrome b-c1 complex, complex III, CIII) and cytochrome c oxidase (complex IV, CIV), that cooperate to transfer electrons derived from NADH and succinate to molecular oxygen, creating an electrochemical gradient over the inner membrane that drives transmembrane transport and the ATP synthase. Cytochrome c oxidase is the component of the respiratory chain that catalyzes the reduction of oxygen to water. Electrons originating from reduced cytochrome c in the intermembrane space (IMS) are transferred via the dinuclear copper A center (CU(A)) of subunit 2 and heme A of subunit 1 to the active site in subunit 1, a binuclear center (BNC) formed by heme A3 and copper B (CU(B)). The BNC reduces molecular oxygen to 2 water molecules using 4 electrons from cytochrome c in the IMS and 4 protons from the mitochondrial matrix. The protein is Cytochrome c oxidase subunit 5A, mitochondrial (COX5A) of Notamacropus parma (Parma wallaby).